We begin with the raw amino-acid sequence, 351 residues long: Nicotinate-nucleotide--dimethylbenzimidazole phosphoribosyltransferase (351 aa).

E313 acts as the Proton acceptor in catalysis.

It belongs to the CobT family.

It carries out the reaction 5,6-dimethylbenzimidazole + nicotinate beta-D-ribonucleotide = alpha-ribazole 5'-phosphate + nicotinate + H(+). It participates in nucleoside biosynthesis; alpha-ribazole biosynthesis; alpha-ribazole from 5,6-dimethylbenzimidazole: step 1/2. Catalyzes the synthesis of alpha-ribazole-5'-phosphate from nicotinate mononucleotide (NAMN) and 5,6-dimethylbenzimidazole (DMB). This Mycobacterium leprae (strain Br4923) protein is Nicotinate-nucleotide--dimethylbenzimidazole phosphoribosyltransferase.